Consider the following 428-residue polypeptide: Glutamine synthetase, chloroplastic (428 aa).

The transit peptide at 1-48 (MAQAVVPAMQCQVGAVRARPAAAAAAAGGRVWGVRRTGRGTSGFRVMA) directs the protein to the chloroplast. The GS beta-grasp domain occupies 75 to 155 (IIAEYIWVGG…VMCDTYTPAG (81 aa)). Residues 95–120 (TISKPVEDPSELPKWNYDGSSTGQAP) are disordered. Residues 159-428 (PTNKRNRAAQ…LAAKKLALKV (270 aa)) enclose the GS catalytic domain.

Belongs to the glutamine synthetase family. As to quaternary structure, homooctamer.

Its subcellular location is the plastid. The protein resides in the chloroplast. The enzyme catalyses L-glutamate + NH4(+) + ATP = L-glutamine + ADP + phosphate + H(+). Its function is as follows. Light-modulated chloroplastic glutamine synthetase, encoded by a nuclear gene and expressed primarily in leaves, and which is responsible for the reassimilation of the ammonia generated by photorespiration. The protein is Glutamine synthetase, chloroplastic of Oryza sativa subsp. japonica (Rice).